The chain runs to 364 residues: Aminomethyltransferase (364 aa).

This sequence belongs to the GcvT family. As to quaternary structure, the glycine cleavage system is composed of four proteins: P, T, L and H.

The enzyme catalyses N(6)-[(R)-S(8)-aminomethyldihydrolipoyl]-L-lysyl-[protein] + (6S)-5,6,7,8-tetrahydrofolate = N(6)-[(R)-dihydrolipoyl]-L-lysyl-[protein] + (6R)-5,10-methylene-5,6,7,8-tetrahydrofolate + NH4(+). Its function is as follows. The glycine cleavage system catalyzes the degradation of glycine. This chain is Aminomethyltransferase, found in Thermotoga sp. (strain RQ2).